Consider the following 451-residue polypeptide: DNA-directed RNA polymerase subunit Rpo1C (451 aa).

Residues 1-68 (MQDIIGKIED…DDDELLDAVE (68 aa)) form a unknown region. The interval 69–451 (DDYQRILKVQ…SVSVVMKERK (383 aa)) is DNA-directed RNA polymerase subunit Rpo1C.

This sequence belongs to the RNA polymerase beta' chain family. As to quaternary structure, part of the RNA polymerase complex.

The protein resides in the cytoplasm. It catalyses the reaction RNA(n) + a ribonucleoside 5'-triphosphate = RNA(n+1) + diphosphate. In terms of biological role, DNA-dependent RNA polymerase (RNAP) catalyzes the transcription of DNA into RNA using the four ribonucleoside triphosphates as substrates. Forms part of the jaw domain. This chain is DNA-directed RNA polymerase subunit Rpo1C, found in Methanothermobacter thermautotrophicus (strain ATCC 29096 / DSM 1053 / JCM 10044 / NBRC 100330 / Delta H) (Methanobacterium thermoautotrophicum).